The chain runs to 430 residues: Serine--tRNA ligase (430 aa).

237–239 contributes to the L-serine binding site; that stretch reads TAE. 268-270 contributes to the ATP binding site; that stretch reads RSE. Residue Glu291 participates in L-serine binding. 355 to 358 is a binding site for ATP; the sequence is EISS. Ser391 contributes to the L-serine binding site.

The protein belongs to the class-II aminoacyl-tRNA synthetase family. Type-1 seryl-tRNA synthetase subfamily. Homodimer. The tRNA molecule binds across the dimer.

The protein localises to the cytoplasm. It carries out the reaction tRNA(Ser) + L-serine + ATP = L-seryl-tRNA(Ser) + AMP + diphosphate + H(+). The enzyme catalyses tRNA(Sec) + L-serine + ATP = L-seryl-tRNA(Sec) + AMP + diphosphate + H(+). It functions in the pathway aminoacyl-tRNA biosynthesis; selenocysteinyl-tRNA(Sec) biosynthesis; L-seryl-tRNA(Sec) from L-serine and tRNA(Sec): step 1/1. Its function is as follows. Catalyzes the attachment of serine to tRNA(Ser). Is also able to aminoacylate tRNA(Sec) with serine, to form the misacylated tRNA L-seryl-tRNA(Sec), which will be further converted into selenocysteinyl-tRNA(Sec). This is Serine--tRNA ligase from Salmonella heidelberg (strain SL476).